The chain runs to 218 residues: Non-structural protein NP-1 (218 aa).

Disordered stretches follow at residues 1 to 89 and 195 to 218; these read MSSG…RTNP and TESEEITDEEMLSAAESMETDASN. 2 stretches are compositionally biased toward basic residues: residues 8–18 and 27–40; these read DKHRAYKRKGS and PWQPHHRSRSRSPI. The span at 58–67 shows a compositional bias: polar residues; sequence SHLSSCTASK. Residues 73 to 86 are compositionally biased toward basic and acidic residues; sequence TKTKENTSGKRDSR. Residues 196–205 are compositionally biased toward acidic residues; the sequence is ESEEITDEEM.

It belongs to the Bocaparvovirus Non-structural protein NP-1 family.

The protein localises to the host nucleus. In terms of biological role, required for the expression of the capsid proteins. Performs the splicing and internal polyadenylation of the viral capsid-encoding mRNA precursor, which allows its maturation and expression. Transactivates the viral promoter. The protein is Non-structural protein NP-1 (NP1) of Human bocavirus 3 (HBoV3).